The primary structure comprises 431 residues: Histidinol dehydrogenase (431 aa).

Positions 127, 189, and 212 each coordinate NAD(+). Positions 237, 259, and 262 each coordinate substrate. 2 residues coordinate Zn(2+): Gln-259 and His-262. Residues Glu-326 and His-327 each act as proton acceptor in the active site. Positions 327, 360, 414, and 419 each coordinate substrate. Asp-360 is a Zn(2+) binding site. His-419 is a Zn(2+) binding site.

Belongs to the histidinol dehydrogenase family. Requires Zn(2+) as cofactor.

It catalyses the reaction L-histidinol + 2 NAD(+) + H2O = L-histidine + 2 NADH + 3 H(+). The protein operates within amino-acid biosynthesis; L-histidine biosynthesis; L-histidine from 5-phospho-alpha-D-ribose 1-diphosphate: step 9/9. Its function is as follows. Catalyzes the sequential NAD-dependent oxidations of L-histidinol to L-histidinaldehyde and then to L-histidine. The chain is Histidinol dehydrogenase from Xanthomonas campestris pv. campestris (strain 8004).